A 75-amino-acid chain; its full sequence is Putative primary metabolism protein HVA1 (75 aa).

Over residues 1–13 the composition is skewed to polar residues; sequence MSVQDKQGQNINV. Disordered stretches follow at residues 1–24 and 40–75; these read MSVQDKQGQNINVGDTVYTPYRGG and AAEKGVKNPPKVLFTDQNNKDVAHNPGTLTDLDKQK.

In terms of biological role, may play a role in primary metabolism. The polypeptide is Putative primary metabolism protein HVA1 (Cryptococcus neoformans var. grubii serotype A (strain H99 / ATCC 208821 / CBS 10515 / FGSC 9487) (Filobasidiella neoformans var. grubii)).